A 314-amino-acid polypeptide reads, in one-letter code: MIKVVFMGTPDFSVPVLRRLIEDGYDVIGVVTQPDRPVGRKKVLTPTPVKVEAEKHGIPVLQPLRIREKDEYEKVLALEPDLIVTAAFGQIVPNEILEAPKYGCINVHASLLPELRGGAPIHYAIMEGKEKTGITIMYMVEKLDAGDILTQVEVEIEERETTGSLFDKLSEAGAHLLSKTVPLLIQGKLEPIKQNEEEVTFAYNIKREQEKIDWTKTGEEVYNHIRGLNPWPVAYTTLAGQVVKVWWGEKVPVTKSAEAGTIVAIEEDGFVVATGNETGVKVTELQPSGKKRMSCSQFLRGTKPEIGTKLGENA.

(6S)-5,6,7,8-tetrahydrofolate is bound at residue 110–113 (SLLP).

The protein belongs to the Fmt family.

The enzyme catalyses L-methionyl-tRNA(fMet) + (6R)-10-formyltetrahydrofolate = N-formyl-L-methionyl-tRNA(fMet) + (6S)-5,6,7,8-tetrahydrofolate + H(+). In terms of biological role, attaches a formyl group to the free amino group of methionyl-tRNA(fMet). The formyl group appears to play a dual role in the initiator identity of N-formylmethionyl-tRNA by promoting its recognition by IF2 and preventing the misappropriation of this tRNA by the elongation apparatus. This is Methionyl-tRNA formyltransferase from Bacillus cereus (strain AH187).